Reading from the N-terminus, the 415-residue chain is Gamma-glutamyl phosphate reductase (415 aa).

It belongs to the gamma-glutamyl phosphate reductase family.

It localises to the cytoplasm. The enzyme catalyses L-glutamate 5-semialdehyde + phosphate + NADP(+) = L-glutamyl 5-phosphate + NADPH + H(+). Its pathway is amino-acid biosynthesis; L-proline biosynthesis; L-glutamate 5-semialdehyde from L-glutamate: step 2/2. Catalyzes the NADPH-dependent reduction of L-glutamate 5-phosphate into L-glutamate 5-semialdehyde and phosphate. The product spontaneously undergoes cyclization to form 1-pyrroline-5-carboxylate. The protein is Gamma-glutamyl phosphate reductase of Bacillus mycoides (strain KBAB4) (Bacillus weihenstephanensis).